Reading from the N-terminus, the 894-residue chain is Alanine--tRNA ligase (894 aa).

The protein belongs to the class-II aminoacyl-tRNA synthetase family.

The protein resides in the cytoplasm. It carries out the reaction tRNA(Ala) + L-alanine + ATP = L-alanyl-tRNA(Ala) + AMP + diphosphate. Its function is as follows. Catalyzes the attachment of alanine to tRNA(Ala) in a two-step reaction: alanine is first activated by ATP to form Ala-AMP and then transferred to the acceptor end of tRNA(Ala). Also edits incorrectly charged Ser-tRNA(Ala) and Gly-tRNA(Ala) via its editing domain. This chain is Alanine--tRNA ligase (alaS), found in Leuconostoc citreum (strain KM20).